A 360-amino-acid polypeptide reads, in one-letter code: MKASLLNKLDVLSDRFEELTALLGDAEVISDQTRFRAYSREYAEVEPVVALYAQLLRVQGDLEGAQALLKDSDPDMREMAVEEVRETKQQLVELEAQLQRMLLPKDPNDGRNVFLEIRAGTGGDEAAIFSGDLFRMYSRYAERRGWRVEILSENEGEHGGYKEVIARVEGDSVYGKLKFESGAHRVQRVPETESQGRIHTSACTVAVLPEPDEQQAIEINPADLRVDTYRSSGAGGQHVNKTDSAIRITHLPSGIVVECQEERSQHKNRARAMSWLSAKLNDQQTSAAANAIASERKLLVGSGDRSERIRTYNFPQGRVTDHRVNLTLYSLDEVLAGGVDAVIEPLLAEYQADQLAALGE.

Glutamine 237 carries the N5-methylglutamine modification.

It belongs to the prokaryotic/mitochondrial release factor family. In terms of processing, methylated by PrmC. Methylation increases the termination efficiency of RF1.

It is found in the cytoplasm. Peptide chain release factor 1 directs the termination of translation in response to the peptide chain termination codons UAG and UAA. The polypeptide is Peptide chain release factor 1 (Pseudomonas syringae pv. syringae (strain B728a)).